Reading from the N-terminus, the 559-residue chain is Formate--tetrahydrofolate ligase (559 aa).

Position 68 to 75 (68 to 75 (TPAGEGKT)) interacts with ATP.

This sequence belongs to the formate--tetrahydrofolate ligase family.

It catalyses the reaction (6S)-5,6,7,8-tetrahydrofolate + formate + ATP = (6R)-10-formyltetrahydrofolate + ADP + phosphate. The protein operates within one-carbon metabolism; tetrahydrofolate interconversion. The polypeptide is Formate--tetrahydrofolate ligase (Moorella thermoacetica (strain ATCC 39073 / JCM 9320)).